The sequence spans 30 residues: Photosystem I reaction center subunit XII (30 aa).

The chain crosses the membrane as a helical span at residues 7-29 (LIAFFLAFTAGILAIKLGQALYD).

This sequence belongs to the PsaM family.

It is found in the plastid. Its subcellular location is the chloroplast thylakoid membrane. The polypeptide is Photosystem I reaction center subunit XII (Pinus thunbergii (Japanese black pine)).